Reading from the N-terminus, the 200-residue chain is NAD(P)H dehydrogenase (quinone) (200 aa).

The Flavodoxin-like domain occupies 4–191; that stretch reads LLVLYYSMYG…TIARFQGEHV (188 aa). FMN is bound by residues 10 to 15 and 79 to 81; these read SMYGHV and TRF. Tyr-12 provides a ligand contact to NAD(+). Trp-99 is a substrate binding site. Residues 114–120 and His-135 each bind FMN; that span reads STASQHG.

It belongs to the WrbA family. The cofactor is FMN.

The enzyme catalyses a quinone + NADH + H(+) = a quinol + NAD(+). It catalyses the reaction a quinone + NADPH + H(+) = a quinol + NADP(+). This Nitrosococcus oceani (strain ATCC 19707 / BCRC 17464 / JCM 30415 / NCIMB 11848 / C-107) protein is NAD(P)H dehydrogenase (quinone).